The chain runs to 203 residues: Small ribosomal subunit protein uS4 (203 aa).

The 61-residue stretch at 92-152 folds into the S4 RNA-binding domain; that stretch reads LRLATVLLRA…EKSRKLVPFI (61 aa).

It belongs to the universal ribosomal protein uS4 family. As to quaternary structure, part of the 30S ribosomal subunit. Contacts protein S5. The interaction surface between S4 and S5 is involved in control of translational fidelity.

In terms of biological role, one of the primary rRNA binding proteins, it binds directly to 16S rRNA where it nucleates assembly of the body of the 30S subunit. Its function is as follows. With S5 and S12 plays an important role in translational accuracy. This chain is Small ribosomal subunit protein uS4, found in Thermobifida fusca (strain YX).